The following is a 123-amino-acid chain: Defensin beta 118 (123 aa).

The signal sequence occupies residues 1–19 (MKLLLLALPMLVLLPQVIP). 3 cysteine pairs are disulfide-bonded: cysteine 27–cysteine 54, cysteine 34–cysteine 48, and cysteine 38–cysteine 55. Residues 65–123 (VPTTSPTPLSDSTRGVIDDILTVRFTTDYFEVSSKKNMVEESEVGQGTQTSLPNVHHSS) constitute a propeptide that is removed on maturation. The disordered stretch occupies residues 100–123 (KNMVEESEVGQGTQTSLPNVHHSS). A compositionally biased stretch (polar residues) spans 109 to 123 (GQGTQTSLPNVHHSS).

Belongs to the beta-defensin family. The three-dimensional structure formed by the three intramolecular disulfide bridges is indispensable for antimicrobial activity.

It is found in the secreted. Its function is as follows. Host defense peptide that exhibits antimicrobial activity against both Gram-negative bacteria, such as E.coli and S.typhimurium, and Gram-positive bacteria, such as S.aureus and B.subtilis. Inhibits cell adhesion of E.coli on intestinal epithelial enterocytes. Causes rapid permeabilization of both the outer and inner membrane of E.coli, leading to morphological alterations on the bacterial surface. Binds to bacterial lipopolysaccharides (LPS) with high affinity, and may thereby be involved in immunoregulation through LPS neutralization. May contribute to epididymal innate immunity and protect the sperm against attack by microorganisms. The polypeptide is Defensin beta 118 (DEFB118) (Pongo pygmaeus (Bornean orangutan)).